The sequence spans 508 residues: Pentatricopeptide repeat-containing protein At5g48730, chloroplastic (508 aa).

A compositionally biased stretch (polar residues) spans 1–10; that stretch reads MVSLSTSTSH. The segment at 1–22 is disordered; it reads MVSLSTSTSHAPPLPTNRRTAE. Residues 1 to 28 constitute a chloroplast transit peptide; sequence MVSLSTSTSHAPPLPTNRRTAERTFTVR. PPR repeat units lie at residues 149 to 183, 184 to 214, 220 to 254, 255 to 290, 291 to 325, 326 to 360, 361 to 395, 396 to 430, 431 to 465, and 466 to 500; these read NVGI…GCVV, NHEV…MKSS, DVHT…GIRP, NTIT…DCKP, DSWT…GIEP, NIRT…HYSW, TIVT…RIFP, SCVT…DIRL, DLVF…GFKP, and DKIT…GEAQ.

Belongs to the PPR family. P subfamily.

The protein localises to the plastid. It is found in the chloroplast. The chain is Pentatricopeptide repeat-containing protein At5g48730, chloroplastic from Arabidopsis thaliana (Mouse-ear cress).